A 202-amino-acid chain; its full sequence is Guanylate kinase (202 aa).

Residues 3-181 form the Guanylate kinase-like domain; it reads GNLFVVAAPS…ALDDLRAVVR (179 aa). Residue 10-17 coordinates ATP; that stretch reads APSGAGKT.

Belongs to the guanylate kinase family.

It is found in the cytoplasm. The catalysed reaction is GMP + ATP = GDP + ADP. Functionally, essential for recycling GMP and indirectly, cGMP. The sequence is that of Guanylate kinase from Dechloromonas aromatica (strain RCB).